Reading from the N-terminus, the 191-residue chain is UPF0398 protein LSEI_1479 (191 aa).

This sequence belongs to the UPF0398 family.

In Lacticaseibacillus paracasei (strain ATCC 334 / BCRC 17002 / CCUG 31169 / CIP 107868 / KCTC 3260 / NRRL B-441) (Lactobacillus paracasei), this protein is UPF0398 protein LSEI_1479.